Reading from the N-terminus, the 121-residue chain is Large ribosomal subunit protein bL12 (121 aa).

Belongs to the bacterial ribosomal protein bL12 family. As to quaternary structure, homodimer. Part of the ribosomal stalk of the 50S ribosomal subunit. Forms a multimeric L10(L12)X complex, where L10 forms an elongated spine to which 2 to 4 L12 dimers bind in a sequential fashion. Binds GTP-bound translation factors.

Functionally, forms part of the ribosomal stalk which helps the ribosome interact with GTP-bound translation factors. Is thus essential for accurate translation. The sequence is that of Large ribosomal subunit protein bL12 from Anoxybacillus flavithermus (strain DSM 21510 / WK1).